The following is a 432-amino-acid chain: uncharacterized protein (432 aa).

The next 12 helical transmembrane spans lie at 35–55 (VARV…VIYL), 60–80 (LPPA…IATG), 112–132 (VAGM…PLWS), 144–164 (VGLL…LGAL), 185–205 (LAVA…LWAA), 209–229 (AVAW…ASLL), 242–262 (AHSI…PVLL), 274–294 (GAVI…LSAM), 313–333 (LIAP…AAGL), 359–379 (AAAV…AAAL), 384–404 (LLGW…PMPL), and 408–428 (TVIA…AALA).

To M.tuberculosis Rv3630 and M.bovis Mb3654.

Its subcellular location is the cell membrane. This is an uncharacterized protein from Mycobacterium tuberculosis (strain CDC 1551 / Oshkosh).